A 125-amino-acid chain; its full sequence is Prepro-urotensin II-gamma (125 aa).

The N-terminal stretch at 1 to 21 is a signal peptide; it reads MMCNLLLSCSVLLLSCSHLLA. The propeptide occupies 109-111; the sequence is QFR. An intrachain disulfide couples cysteine 119 to cysteine 124.

This sequence belongs to the urotensin-2 family.

The protein resides in the secreted. In terms of biological role, urotensin is found in the teleost caudal neurosecretory system. It has a suggested role in osmoregulation and as a corticotropin-releasing factor. The non-hormonal portion of this precursor may be a urotensin binding protein, urophysin. The sequence is that of Prepro-urotensin II-gamma from Cyprinus carpio (Common carp).